We begin with the raw amino-acid sequence, 388 residues long: NADPH-dependent butanol dehydrogenase (388 aa).

This sequence belongs to the iron-containing alcohol dehydrogenase family.

Functionally, this enzyme has activity using butanol and ethanol as substrates. In Clostridium saccharobutylicum, this protein is NADPH-dependent butanol dehydrogenase (adh1).